The following is a 237-amino-acid chain: Phosphoadenosine 5'-phosphosulfate reductase (237 aa).

C231 (nucleophile; cysteine thiosulfonate intermediate) is an active-site residue.

The protein belongs to the PAPS reductase family. CysH subfamily.

It is found in the cytoplasm. The enzyme catalyses [thioredoxin]-disulfide + sulfite + adenosine 3',5'-bisphosphate + 2 H(+) = [thioredoxin]-dithiol + 3'-phosphoadenylyl sulfate. Its pathway is sulfur metabolism; hydrogen sulfide biosynthesis; sulfite from sulfate: step 3/3. Its function is as follows. Catalyzes the formation of sulfite from phosphoadenosine 5'-phosphosulfate (PAPS) using thioredoxin as an electron donor. In Xylella fastidiosa (strain 9a5c), this protein is Phosphoadenosine 5'-phosphosulfate reductase.